Consider the following 326-residue polypeptide: Phosphate acyltransferase (326 aa).

The protein belongs to the PlsX family. In terms of assembly, homodimer. Probably interacts with PlsY.

The protein resides in the cytoplasm. It carries out the reaction a fatty acyl-[ACP] + phosphate = an acyl phosphate + holo-[ACP]. The protein operates within lipid metabolism; phospholipid metabolism. Catalyzes the reversible formation of acyl-phosphate (acyl-PO(4)) from acyl-[acyl-carrier-protein] (acyl-ACP). This enzyme utilizes acyl-ACP as fatty acyl donor, but not acyl-CoA. The chain is Phosphate acyltransferase from Macrococcus caseolyticus (strain JCSC5402) (Macrococcoides caseolyticum).